The chain runs to 397 residues: Elongation factor Tu (397 aa).

Residues K10–E207 enclose the tr-type G domain. The interval G19–T26 is G1. G19–T26 serves as a coordination point for GTP. T26 is a binding site for Mg(2+). The segment at G60–N64 is G2. The interval D81–G84 is G3. Residues D81–H85 and N136–D139 each bind GTP. The G4 stretch occupies residues N136–D139. The tract at residues S174 to L176 is G5.

Belongs to the TRAFAC class translation factor GTPase superfamily. Classic translation factor GTPase family. EF-Tu/EF-1A subfamily. In terms of assembly, monomer.

It localises to the cytoplasm. The catalysed reaction is GTP + H2O = GDP + phosphate + H(+). Functionally, GTP hydrolase that promotes the GTP-dependent binding of aminoacyl-tRNA to the A-site of ribosomes during protein biosynthesis. The sequence is that of Elongation factor Tu from Pseudomonas fluorescens (strain ATCC BAA-477 / NRRL B-23932 / Pf-5).